The sequence spans 153 residues: Xanthine-guanine phosphoribosyltransferase (153 aa).

5-phospho-alpha-D-ribose 1-diphosphate contacts are provided by residues 37-38, Arg69, and 88-96; these read RG and DDLVDTGGT. Arg69 contributes to the GMP binding site. Position 89 (Asp89) interacts with Mg(2+). Positions 92 and 135 each coordinate guanine. Residues Asp92 and Ile135 each contribute to the xanthine site. GMP contacts are provided by residues 92-96 and 134-135; these read DTGGT and WI.

It belongs to the purine/pyrimidine phosphoribosyltransferase family. XGPT subfamily. Homotetramer. Mg(2+) is required as a cofactor.

The protein localises to the cell inner membrane. It carries out the reaction GMP + diphosphate = guanine + 5-phospho-alpha-D-ribose 1-diphosphate. It catalyses the reaction XMP + diphosphate = xanthine + 5-phospho-alpha-D-ribose 1-diphosphate. The enzyme catalyses IMP + diphosphate = hypoxanthine + 5-phospho-alpha-D-ribose 1-diphosphate. Its pathway is purine metabolism; GMP biosynthesis via salvage pathway; GMP from guanine: step 1/1. The protein operates within purine metabolism; XMP biosynthesis via salvage pathway; XMP from xanthine: step 1/1. Functionally, purine salvage pathway enzyme that catalyzes the transfer of the ribosyl-5-phosphate group from 5-phospho-alpha-D-ribose 1-diphosphate (PRPP) to the N9 position of the 6-oxopurines guanine and xanthine to form the corresponding ribonucleotides GMP (guanosine 5'-monophosphate) and XMP (xanthosine 5'-monophosphate), with the release of PPi. To a lesser extent, also acts on hypoxanthine. The sequence is that of Xanthine-guanine phosphoribosyltransferase from Photorhabdus laumondii subsp. laumondii (strain DSM 15139 / CIP 105565 / TT01) (Photorhabdus luminescens subsp. laumondii).